The primary structure comprises 588 residues: Neopullulanase (588 aa).

Residues N147, N149, S153, G172, and D174 each coordinate Ca(2+). Residues H247 and R326 each coordinate substrate. The active-site Nucleophile is D328. Catalysis depends on E357, which acts as the Proton donor. Residues 423–424 (HD), D468, and R472 contribute to the substrate site.

Belongs to the glycosyl hydrolase 13 family. As to quaternary structure, homodimer. Ca(2+) is required as a cofactor.

The enzyme catalyses Hydrolysis of pullulan to panose (6-alpha-D-glucosylmaltose).. Functionally, hydrolyzes pullulan efficiently but only a small amount of starch. Endohydrolysis of 1,4-alpha-glucosidic linkages in pullulan to form panose. Also cleaves (1-6)-alpha-glucosidic linkages to form maltotriose. In Geobacillus stearothermophilus (Bacillus stearothermophilus), this protein is Neopullulanase (nplT).